An 837-amino-acid polypeptide reads, in one-letter code: Periplasmic nitrate reductase (837 aa).

A signal peptide (tat-type signal) is located at residues 1–31 (MKLNRRDFIKANAAAAAISAAGLSVPGAAVA). Residues 37 to 93 (IRWDKAACRFCGTGCGVLVGTQDGRVVATQGDPDAPVNRGLNCIKGYFLSKIMYGAD) form the 4Fe-4S Mo/W bis-MGD-type domain. 4 residues coordinate [4Fe-4S] cluster: Cys-44, Cys-47, Cys-51, and Cys-79. Residues Lys-81, Gln-148, Asn-173, Cys-177, 210 to 217 (WGSNMAEM), 241 to 245 (STFEH), and 260 to 262 (QTD) contribute to the Mo-bis(molybdopterin guanine dinucleotide) site. The tract at residues 308–329 (EKNATSNGYPDADGKPKGDTGK) is disordered. Residues 319-329 (ADGKPKGDTGK) are compositionally biased toward basic and acidic residues. Mo-bis(molybdopterin guanine dinucleotide) contacts are provided by residues Met-381, Gln-385, Asn-491, 517–518 (SD), Lys-540, Asp-567, and 727–736 (TGRVLEHWHT). Substrate is bound at residue Phe-803. Positions 811 and 828 each coordinate Mo-bis(molybdopterin guanine dinucleotide).

This sequence belongs to the prokaryotic molybdopterin-containing oxidoreductase family. NasA/NapA/NarB subfamily. As to quaternary structure, component of the periplasmic nitrate reductase NapAB complex composed of NapA and NapB. The cofactor is [4Fe-4S] cluster. Mo-bis(molybdopterin guanine dinucleotide) serves as cofactor. In terms of processing, predicted to be exported by the Tat system. The position of the signal peptide cleavage has not been experimentally proven.

The protein localises to the periplasm. It catalyses the reaction 2 Fe(II)-[cytochrome] + nitrate + 2 H(+) = 2 Fe(III)-[cytochrome] + nitrite + H2O. Catalytic subunit of the periplasmic nitrate reductase complex NapAB. Receives electrons from NapB and catalyzes the reduction of nitrate to nitrite. The chain is Periplasmic nitrate reductase from Dechloromonas aromatica (strain RCB).